The following is a 203-amino-acid chain: Secreted phosphoprotein 24 (203 aa).

A signal peptide spans 1 to 23; the sequence is MEKMVMKMLVIFVFGMNHWTCTG. Intrachain disulfides connect C86–C97 and C110–C128. S90 carries the post-translational modification Phosphoserine. Phosphoserine is present on residues S138, S139, S166, and S175. Residues 155–174 form a disordered region; it reads NSHLLGLTPDRSRGEPLYER. Basic and acidic residues predominate over residues 164-174; that stretch reads DRSRGEPLYER.

The protein belongs to the SPP2 family. Multiply phosphorylated at serine residues. In terms of processing, phosphorylation sites are present in the extracellular medium.

Its subcellular location is the secreted. In terms of biological role, could coordinate an aspect of bone turnover. The polypeptide is Secreted phosphoprotein 24 (SPP2) (Ovis aries (Sheep)).